The primary structure comprises 315 residues: MNIFLANPRGFCAGVDRAINIVKNAIEIYGPPIYVYNEVVHNKYVVNSLKKIGSIFVKKICDVPEKSILIFSAHGVSKSILKEANKRKLIIFDATCPLVSKVHHEIKRASKLRSEVIIIGHKNHPEIIGTIGQYNNPNKKVFVIQSIEEICKLKIKDPNNLFYFTQTTLSVDDTNKIIFAIKKKYPYIIEPRKKDICYATENRQKSIKKIIKLVDIIFIIGSKNSSNSNRLFEIANKSGKKSYLIDTYKEIKKSWLNGVNNIGITAGASAPEILVQQVVNYLKIFYKNSVNIYQVDGDIEKTKFMIPKKLILKIK.

A [4Fe-4S] cluster-binding site is contributed by cysteine 12. Residues histidine 41 and histidine 74 each contribute to the (2E)-4-hydroxy-3-methylbut-2-enyl diphosphate site. Dimethylallyl diphosphate is bound by residues histidine 41 and histidine 74. Isopentenyl diphosphate-binding residues include histidine 41 and histidine 74. Cysteine 96 is a binding site for [4Fe-4S] cluster. Histidine 124 contacts (2E)-4-hydroxy-3-methylbut-2-enyl diphosphate. Position 124 (histidine 124) interacts with dimethylallyl diphosphate. Histidine 124 provides a ligand contact to isopentenyl diphosphate. Glutamate 126 (proton donor) is an active-site residue. Position 167 (threonine 167) interacts with (2E)-4-hydroxy-3-methylbut-2-enyl diphosphate. Residue cysteine 197 coordinates [4Fe-4S] cluster. Residues serine 225, serine 226, asparagine 227, and serine 269 each coordinate (2E)-4-hydroxy-3-methylbut-2-enyl diphosphate. Dimethylallyl diphosphate contacts are provided by serine 225, serine 226, asparagine 227, and serine 269. 4 residues coordinate isopentenyl diphosphate: serine 225, serine 226, asparagine 227, and serine 269.

It belongs to the IspH family. As to quaternary structure, homodimer. Requires [4Fe-4S] cluster as cofactor.

It catalyses the reaction isopentenyl diphosphate + 2 oxidized [2Fe-2S]-[ferredoxin] + H2O = (2E)-4-hydroxy-3-methylbut-2-enyl diphosphate + 2 reduced [2Fe-2S]-[ferredoxin] + 2 H(+). The catalysed reaction is dimethylallyl diphosphate + 2 oxidized [2Fe-2S]-[ferredoxin] + H2O = (2E)-4-hydroxy-3-methylbut-2-enyl diphosphate + 2 reduced [2Fe-2S]-[ferredoxin] + 2 H(+). It participates in isoprenoid biosynthesis; dimethylallyl diphosphate biosynthesis; dimethylallyl diphosphate from (2E)-4-hydroxy-3-methylbutenyl diphosphate: step 1/1. It functions in the pathway isoprenoid biosynthesis; isopentenyl diphosphate biosynthesis via DXP pathway; isopentenyl diphosphate from 1-deoxy-D-xylulose 5-phosphate: step 6/6. Catalyzes the conversion of 1-hydroxy-2-methyl-2-(E)-butenyl 4-diphosphate (HMBPP) into a mixture of isopentenyl diphosphate (IPP) and dimethylallyl diphosphate (DMAPP). Acts in the terminal step of the DOXP/MEP pathway for isoprenoid precursor biosynthesis. This Wigglesworthia glossinidia brevipalpis protein is 4-hydroxy-3-methylbut-2-enyl diphosphate reductase.